The chain runs to 344 residues: GDSL esterase/lipase At2g19010 (344 aa).

The first 21 residues, M1–G21, serve as a signal peptide directing secretion. S33 functions as the Nucleophile in the catalytic mechanism. The N-linked (GlcNAc...) asparagine glycan is linked to N303. Catalysis depends on residues D311 and H314.

Belongs to the 'GDSL' lipolytic enzyme family.

The protein resides in the secreted. This Arabidopsis thaliana (Mouse-ear cress) protein is GDSL esterase/lipase At2g19010.